We begin with the raw amino-acid sequence, 188 residues long: Putative manganese efflux pump MntP (188 aa).

6 helical membrane passes run 2–22 (IMGN…AFAV), 39–59 (LITG…GFLL), 67–87 (ITAI…LNMI), 107–127 (IILS…FAFL), 129–149 (VDIV…SFLG), and 166–186 (LAGG…HLGF).

It belongs to the MntP (TC 9.B.29) family.

The protein localises to the cell membrane. Probably functions as a manganese efflux pump. The polypeptide is Putative manganese efflux pump MntP (Desulfitobacterium hafniense (strain Y51)).